Here is a 371-residue protein sequence, read N- to C-terminus: Uroporphyrinogen decarboxylase (371 aa).

Over residues 1–14 the composition is skewed to polar residues; that stretch reads MARWATMSTETTGT. A disordered region spans residues 1–30; sequence MARWATMSTETTGTGARDEGPRPGDPADSP. Residues 49 to 53, Asp-98, Tyr-173, Ser-228, and His-342 each bind substrate; that span reads RQAGR.

The protein belongs to the uroporphyrinogen decarboxylase family. Homodimer.

It localises to the cytoplasm. It carries out the reaction uroporphyrinogen III + 4 H(+) = coproporphyrinogen III + 4 CO2. Its pathway is porphyrin-containing compound metabolism; protoporphyrin-IX biosynthesis; coproporphyrinogen-III from 5-aminolevulinate: step 4/4. Catalyzes the decarboxylation of four acetate groups of uroporphyrinogen-III to yield coproporphyrinogen-III. This is Uroporphyrinogen decarboxylase from Salinispora tropica (strain ATCC BAA-916 / DSM 44818 / JCM 13857 / NBRC 105044 / CNB-440).